The sequence spans 230 residues: Ribonuclease 3 (230 aa).

The RNase III domain occupies 5 to 125 (YSRFYNILGY…VIGAIYLDSD (121 aa)). E40 contributes to the Mg(2+) binding site. The active site involves D44. Mg(2+) contacts are provided by D111 and E114. E114 is an active-site residue. The 71-residue stretch at 153–223 (DSKSKLQEIL…AEKMIEMLSQ (71 aa)) folds into the DRBM domain.

This sequence belongs to the ribonuclease III family. As to quaternary structure, homodimer. It depends on Mg(2+) as a cofactor.

The protein localises to the cytoplasm. It catalyses the reaction Endonucleolytic cleavage to 5'-phosphomonoester.. Its function is as follows. Digests double-stranded RNA. Involved in the processing of primary rRNA transcript to yield the immediate precursors to the large and small rRNAs (23S and 16S). Processes some mRNAs, and tRNAs when they are encoded in the rRNA operon. Processes pre-crRNA and tracrRNA of type II CRISPR loci if present in the organism. In Francisella tularensis subsp. tularensis (strain WY96-3418), this protein is Ribonuclease 3.